Here is a 2130-residue protein sequence, read N- to C-terminus: Bromodomain adjacent to zinc finger domain protein 2B (2130 aa).

Disordered stretches follow at residues 1–42, 82–118, 151–293, 491–518, 543–633, 756–790, and 944–966; these read MESG…TGAA, LFAP…SLNG, GGRK…QKQP, KTTG…PVSN, VDSD…SSIG, EGRR…GSTE, and RKKA…LNKE. The span at 8–33 shows a compositional bias: low complexity; sequence TSSSVSSTAAASSPVSSTPSVASAVS. The span at 183 to 206 shows a compositional bias: low complexity; it reads ESSSNSDSDSGSSSDTSSEGISSS. The span at 207–234 shows a compositional bias: acidic residues; the sequence is DSDDLEEDEEEEEDQSAEESEDDESDSE. The segment covering 250 to 270 has biased composition (basic and acidic residues); the sequence is GVKDMKTDGQKAHEKSQEKRT. A compositionally biased stretch (polar residues) spans 272 to 283; sequence QQIPLVSDSQTH. The span at 284-293 shows a compositional bias: low complexity; sequence SSFQSQQKQP. Residues 492-505 show a composition bias toward polar residues; sequence TTGNRTLVVPSTSP. Over residues 543-554 the composition is skewed to basic and acidic residues; the sequence is VDSDAPSSKESD. The span at 555–611 shows a compositional bias: acidic residues; the sequence is DSNDDDDDDEDEDEDDEDDDSDDSQSESDSNSESDTDGSEDEDDEDDKDQDESDTDT. Residues 623–633 show a composition bias toward low complexity; that stretch reads TGSSIKSSSIG. The MBD domain maps to 687–762; the sequence is VTDERELRVP…RAMEGRRGRP (76 aa). Over residues 756–775 the composition is skewed to basic and acidic residues; the sequence is EGRRGRPPNPDRQHSREESR. A coiled-coil region spans residues 797–984; the sequence is AKLLRKLQAQ…ELEMAKELKK (188 aa). The DDT domain occupies 1010–1075; that stretch reads GSTFSDCLMI…VTAAVCDPGL (66 aa). Disordered stretches follow at residues 1186-1265, 1431-1454, 1499-1545, and 1773-1795; these read TGKR…DQTV, SLCS…NLFS, VTHV…PFAM, and HKKH…ERKN. Positions 1220-1244 are enriched in acidic residues; that stretch reads SDYDDDDDDDSDDQADEDDEDEEDK. Over residues 1245–1254 the composition is skewed to basic and acidic residues; sequence EDKKGKKAEV. Pro residues predominate over residues 1514–1526; sequence SHPPSKSPSPVPS. A PHD-type zinc finger spans residues 1895–1945; that stretch reads KVYCQICRKGDNEELLLLCDGCDKGCHTYCHRPKITTIPDGDWFCPACIAK. The disordered stretch occupies residues 1957–2019; that stretch reads QIKGKKSNEQ…KQENFTAIKK (63 aa). The segment covering 1991–2002 has biased composition (basic and acidic residues); the sequence is GKTEPKKRKMDE. The segment covering 2004–2014 has biased composition (polar residues); that stretch reads VSVSQGKQENF. In terms of domain architecture, Bromo spans 2022–2126; that stretch reads RDDSKDLAIC…KYFEKKWTEI (105 aa).

Belongs to the WAL family.

The protein localises to the nucleus. Its function is as follows. Regulatory subunit of the ATP-dependent BRF-1 and BRF-5 ISWI chromatin remodeling complexes, which form ordered nucleosome arrays on chromatin and facilitate access to DNA during DNA-templated processes such as DNA replication, transcription, and repair. Both complexes regulate the spacing of nucleosomes along the chromatin and have the ability to slide mononucleosomes to the center of a DNA template. The BRF-1 ISWI chromatin remodeling complex has a lower ATP hydrolysis rate than the BRF-5 ISWI chromatin remodeling complex. Chromatin reader protein. Represses the expression of mitochondrial function-related genes, perhaps by transcriptional regulation. The protein is Bromodomain adjacent to zinc finger domain protein 2B (BAZ2B) of Gallus gallus (Chicken).